The chain runs to 2409 residues: Reducing polyketide synthase FUB1 (2409 aa).

Positions 1–43 are enriched in low complexity; that stretch reads MTLSNGSNGANGTSNGHGAHPSANGFHNAANGGANNGTPNGGA. The tract at residues 1-49 is disordered; the sequence is MTLSNGSNGANGTSNGHGAHPSANGFHNAANGGANNGTPNGGAEYNASL. The region spanning 57–479 is the Ketosynthase family 3 (KS3) domain; that stretch reads SSAIAVIGVS…GANAHAVLDD (423 aa). Active-site for beta-ketoacyl synthase activity residues include cysteine 230, histidine 365, and histidine 403. A malonyl-CoA:ACP transacylase (MAT) domain region spans residues 608–929; the sequence is TFIFTGQGAQ…FSAIKRKQDA (322 aa). Catalysis depends on serine 699, which acts as the For malonyltransferase activity. The interval 994–1127 is N-terminal hotdog fold; that stretch reads LELLGVRDPR…GLVSTSYKRE (134 aa). The 314-residue stretch at 994-1307 folds into the PKS/mFAS DH domain; it reads LELLGVRDPR…TVPLRGASDP (314 aa). Residues 995–1302 form a dehydratase (DH) domain region; the sequence is ELLGVRDPRS…LEGCKTVPLR (308 aa). Histidine 1026 functions as the Proton acceptor; for dehydratase activity in the catalytic mechanism. A C-terminal hotdog fold region spans residues 1155 to 1307; it reads LPSVDPTVFY…TVPLRGASDP (153 aa). The active-site Proton donor; for dehydratase activity is aspartate 1220. The segment at 1713-2025 is enoyl reductase (ER) domain; it reads GLLDTLEYLS…SGGHVGKIVL (313 aa). Residues 2049–2225 form a ketoreductase (KR) domain region; the sequence is ATYVLIGGLG…AATSINLSLV (177 aa). One can recognise a Carrier domain in the interval 2328-2405; sequence EVYEIVLQQL…GFAKKVMAKS (78 aa). Serine 2365 carries the post-translational modification O-(pantetheine 4'-phosphoryl)serine.

The protein operates within mycotoxin biosynthesis. In terms of biological role, reducing polyketide synthase; part of the gene cluster that mediates the biosynthesis of fusaric acid, a mycotoxin with low to moderate toxicity to animals and humans, but with high phytotoxic properties. L-aspartate is suggested as fusaric acid amino acid precursor that is activated and further processed to O-acetyl-L-homoserine by cluster enzymes aspartate kinase FUB3 and homoserine O-acetyltransferase FUB5, as well as enzymes of the primary metabolism. The polyketide synthase (PKS) FUB1 generates the triketide trans-2-hexenal which is presumptively released by the hydrolase FUB4 and linked to the NRPS-bound amino acid precursor by NAD(P)-dependent dehydrogenase FUB6. FUB1, FUB4, and the non-canonical NRPS Fub8 may form an enzyme complex. Further processing of the NRPS-bound intermediate might be carried out by FUB6 and the sulfhydrylase FUB7, enabling a spontaneous electrocyclization to close the carbon backbone of fusaric acid. Dihydrofusaric acid is likely to be released via reduction by the thioester reductase (TR) domain of FUB8 whereupon the final oxidation to fusaric acid may (also) be performed by the FMN-dependent dehydrogenase FUB9. In Gibberella moniliformis (strain M3125 / FGSC 7600) (Maize ear and stalk rot fungus), this protein is Reducing polyketide synthase FUB1.